We begin with the raw amino-acid sequence, 432 residues long: uncharacterized protein (432 aa).

Positions 1–14 (MSDTTDVPENQKSP) are enriched in polar residues. Residues 1–42 (MSDTTDVPENQKSPKPSGKADKRKIEEKPENSSLKRKKFEDP) are disordered. Over residues 18–30 (GKADKRKIEEKPE) the composition is skewed to basic and acidic residues. An S4 RNA-binding domain is found at 85 to 148 (RKMVEVFSGE…HEHPIRDLPI (64 aa)). Residue aspartate 199 is part of the active site.

It belongs to the pseudouridine synthase RluA family.

This is an uncharacterized protein from Caenorhabditis elegans.